We begin with the raw amino-acid sequence, 116 residues long: Large ribosomal subunit protein bL17 (116 aa).

This sequence belongs to the bacterial ribosomal protein bL17 family. In terms of assembly, part of the 50S ribosomal subunit. Contacts protein L32.

In Cyanothece sp. (strain PCC 7425 / ATCC 29141), this protein is Large ribosomal subunit protein bL17.